We begin with the raw amino-acid sequence, 264 residues long: Indolethylamine N-methyltransferase (264 aa).

Lys14 bears the N6-succinyllysine mark. S-adenosyl-L-methionine contacts are provided by residues Tyr21, Tyr26, 64 to 65 (GS), Tyr70, Asp86, and Asn91. Lys97 bears the N6-succinyllysine mark. S-adenosyl-L-methionine contacts are provided by residues 143-144 (DV) and Phe164.

It belongs to the class I-like SAM-binding methyltransferase superfamily. NNMT/PNMT/TEMT family. Monomer. In terms of tissue distribution, detected in lung and liver (at protein level).

It is found in the cytoplasm. It carries out the reaction a tertiary amine + S-adenosyl-L-methionine = a methylated tertiary amine + S-adenosyl-L-homocysteine + H(+). The enzyme catalyses a secondary amine + S-adenosyl-L-methionine = a methylated secondary amine + S-adenosyl-L-homocysteine + H(+). The catalysed reaction is a primary amine + S-adenosyl-L-methionine = a methylated primary amine + S-adenosyl-L-homocysteine + H(+). It catalyses the reaction dimethyl sulfide + S-adenosyl-L-methionine = trimethylsulfonium + S-adenosyl-L-homocysteine. Inhibited by the S-adenosyl-L-methionine analog sinefungin and by the product S-adenosyl-L-homocysteine. In terms of biological role, catalyzes the N-methylation of tryptamine and structurally related compounds. Functions as a thioether S-methyltransferase and is active with a variety of thioethers and the corresponding selenium and tellurium compounds, including 3-methylthiopropionaldehyde, dimethyl selenide, dimethyl telluride, 2-methylthioethylamine, 2-methylthioethanol, methyl-n-propyl sulfide and diethyl sulfide. Plays an important role in the detoxification of selenium compounds. The protein is Indolethylamine N-methyltransferase (Inmt) of Mus musculus (Mouse).